We begin with the raw amino-acid sequence, 270 residues long: MATYIVGDLHGCFDELQLLLKQVNYNPAQDELWLTGDLVARGAKSLECLRFVKDPKNNAKTILGNHDLHLLATLLGVKKVKPNDQVDAIFAAEDRADLQNWLRNQPLLIQHPKYGFLLTHAGISPEWNLTETIACAREAEAVLQSGHYADYIAQMYENTPDHWSAEWQGIERWRYIINVFTRMRFCYADKRLDFACKLPVEDAPNELKPWFKLDNPLFHQQDIIFGHWASLMGKADKPNIYALDTGCAWGNHLTMIRWEDKQIFTQERLK.

This sequence belongs to the Ap4A hydrolase family.

It carries out the reaction P(1),P(4)-bis(5'-adenosyl) tetraphosphate + H2O = 2 ADP + 2 H(+). Hydrolyzes diadenosine 5',5'''-P1,P4-tetraphosphate to yield ADP. The chain is Bis(5'-nucleosyl)-tetraphosphatase, symmetrical from Actinobacillus pleuropneumoniae serotype 5b (strain L20).